The following is a 140-amino-acid chain: Large ribosomal subunit protein uL11 (140 aa).

This sequence belongs to the universal ribosomal protein uL11 family. In terms of assembly, part of the ribosomal stalk of the 50S ribosomal subunit. Interacts with L10 and the large rRNA to form the base of the stalk. L10 forms an elongated spine to which L12 dimers bind in a sequential fashion forming a multimeric L10(L12)X complex. One or more lysine residues are methylated.

Functionally, forms part of the ribosomal stalk which helps the ribosome interact with GTP-bound translation factors. The protein is Large ribosomal subunit protein uL11 of Desulfatibacillum aliphaticivorans.